The following is a 295-amino-acid chain: Diaminopimelate epimerase (295 aa).

The substrate site is built by Asn13, Gln46, and Asn66. The active-site Proton donor is the Cys75. Substrate-binding positions include 76 to 77, Asn162, Asn195, and 213 to 214; these read GN and ER. The active-site Proton acceptor is Cys222. 223–224 serves as a coordination point for substrate; sequence GT.

The protein belongs to the diaminopimelate epimerase family. In terms of assembly, homodimer.

It is found in the cytoplasm. It catalyses the reaction (2S,6S)-2,6-diaminopimelate = meso-2,6-diaminopimelate. Its pathway is amino-acid biosynthesis; L-lysine biosynthesis via DAP pathway; DL-2,6-diaminopimelate from LL-2,6-diaminopimelate: step 1/1. In terms of biological role, catalyzes the stereoinversion of LL-2,6-diaminopimelate (L,L-DAP) to meso-diaminopimelate (meso-DAP), a precursor of L-lysine and an essential component of the bacterial peptidoglycan. This Psychrobacter arcticus (strain DSM 17307 / VKM B-2377 / 273-4) protein is Diaminopimelate epimerase.